The chain runs to 404 residues: Riboflavin biosynthesis protein RibBA (404 aa).

A DHBP synthase region spans residues 1-204; the sequence is MEELKLNTIE…IRDLIAYRLK (204 aa). Residues 30–31, Asp-35, 143–147, and Glu-167 contribute to the D-ribulose 5-phosphate site; these read RE and RAGHT. Mg(2+) is bound at residue Glu-31. His-146 contacts Mg(2+). The tract at residues 205–404 is GTP cyclohydrolase II; that stretch reads QESLVEKGVE…RMGHTLHFNK (200 aa). Residue 255–259 coordinates GTP; sequence RVHSS. Positions 260, 271, and 273 each coordinate Zn(2+). GTP is bound by residues Gln-276, 298–300, and Thr-320; that span reads EGR. Residue Asp-332 is the Proton acceptor; for GTP cyclohydrolase activity of the active site. The active-site Nucleophile; for GTP cyclohydrolase activity is Arg-334. GTP is bound by residues Thr-355 and Lys-360.

In the N-terminal section; belongs to the DHBP synthase family. The protein in the C-terminal section; belongs to the GTP cyclohydrolase II family. It depends on Mg(2+) as a cofactor. The cofactor is Mn(2+). Zn(2+) is required as a cofactor.

The enzyme catalyses D-ribulose 5-phosphate = (2S)-2-hydroxy-3-oxobutyl phosphate + formate + H(+). It catalyses the reaction GTP + 4 H2O = 2,5-diamino-6-hydroxy-4-(5-phosphoribosylamino)-pyrimidine + formate + 2 phosphate + 3 H(+). Its pathway is cofactor biosynthesis; riboflavin biosynthesis; 2-hydroxy-3-oxobutyl phosphate from D-ribulose 5-phosphate: step 1/1. It functions in the pathway cofactor biosynthesis; riboflavin biosynthesis; 5-amino-6-(D-ribitylamino)uracil from GTP: step 1/4. In terms of biological role, catalyzes the conversion of D-ribulose 5-phosphate to formate and 3,4-dihydroxy-2-butanone 4-phosphate. Functionally, catalyzes the conversion of GTP to 2,5-diamino-6-ribosylamino-4(3H)-pyrimidinone 5'-phosphate (DARP), formate and pyrophosphate. The protein is Riboflavin biosynthesis protein RibBA of Phocaeicola vulgatus (strain ATCC 8482 / DSM 1447 / JCM 5826 / CCUG 4940 / NBRC 14291 / NCTC 11154) (Bacteroides vulgatus).